We begin with the raw amino-acid sequence, 193 residues long: FMN-dependent NADH:quinone oxidoreductase (193 aa).

Residues serine 9, 15–17 (SSS), and 137–140 (TSGG) contribute to the FMN site.

It belongs to the azoreductase type 1 family. As to quaternary structure, homodimer. It depends on FMN as a cofactor.

The catalysed reaction is 2 a quinone + NADH + H(+) = 2 a 1,4-benzosemiquinone + NAD(+). It catalyses the reaction N,N-dimethyl-1,4-phenylenediamine + anthranilate + 2 NAD(+) = 2-(4-dimethylaminophenyl)diazenylbenzoate + 2 NADH + 2 H(+). Quinone reductase that provides resistance to thiol-specific stress caused by electrophilic quinones. Functionally, also exhibits azoreductase activity. Catalyzes the reductive cleavage of the azo bond in aromatic azo compounds to the corresponding amines. This is FMN-dependent NADH:quinone oxidoreductase from Pelagibacter ubique (strain HTCC1062).